Consider the following 200-residue polypeptide: Thymidine kinase (200 aa).

Residues 15–22 and 88–91 contribute to the ATP site; these read GPMYSGKS and DEVQ. Catalysis depends on Glu-89, which acts as the Proton acceptor. Residues Cys-145, Cys-148, Cys-177, and Cys-180 each contribute to the Zn(2+) site.

It belongs to the thymidine kinase family. As to quaternary structure, homotetramer.

It localises to the cytoplasm. It catalyses the reaction thymidine + ATP = dTMP + ADP + H(+). In Mycoplasma mobile (strain ATCC 43663 / 163K / NCTC 11711) (Mesomycoplasma mobile), this protein is Thymidine kinase.